Consider the following 247-residue polypeptide: DNA polymerase sliding clamp 1 (247 aa).

The protein belongs to the PCNA family. As to quaternary structure, heterotrimer. The subunits circularize to form a toroid; DNA passes through its center. Replication factor C (RFC) is required to load the toroid on the DNA.

In terms of biological role, sliding clamp subunit that acts as a moving platform for DNA processing. Responsible for tethering the catalytic subunit of DNA polymerase and other proteins to DNA during high-speed replication. This is DNA polymerase sliding clamp 1 from Aeropyrum pernix (strain ATCC 700893 / DSM 11879 / JCM 9820 / NBRC 100138 / K1).